The chain runs to 178 residues: Large ribosomal subunit protein uL6 (178 aa).

It belongs to the universal ribosomal protein uL6 family. In terms of assembly, part of the 50S ribosomal subunit.

This protein binds to the 23S rRNA, and is important in its secondary structure. It is located near the subunit interface in the base of the L7/L12 stalk, and near the tRNA binding site of the peptidyltransferase center. This chain is Large ribosomal subunit protein uL6, found in Halalkalibacterium halodurans (strain ATCC BAA-125 / DSM 18197 / FERM 7344 / JCM 9153 / C-125) (Bacillus halodurans).